Reading from the N-terminus, the 245-residue chain is Cysteine-rich secretory protein 3 (245 aa).

The signal sequence occupies residues 1–20; that stretch reads MTLFPVLLFLVAGLLPSFPA. The SCP domain maps to 43 to 171; sequence VNKHNELRRA…VLKYYYVCQY (129 aa). Intrachain disulfides connect C191-C198, C194-C203, C207-C240, C216-C234, and C225-C238. The ShKT domain maps to 207-240; it reads CKYEDLYSNCKSLKLTLTCKHQLVRDSCKASCNC. N239 carries N-linked (GlcNAc...) asparagine glycosylation.

Belongs to the CRISP family. As to quaternary structure, interacts with A1BG. In terms of tissue distribution, salivary gland, pancreas and prostate &gt; epididymis, ovary, thymus and colon.

The protein resides in the secreted. This chain is Cysteine-rich secretory protein 3 (CRISP3), found in Homo sapiens (Human).